Here is a 249-residue protein sequence, read N- to C-terminus: Transmembrane protein 51 (249 aa).

Transmembrane regions (helical) follow at residues 17 to 37 (IGLG…VPGF) and 64 to 84 (VAYV…CLSI). Disordered stretches follow at residues 95-126 (ELAR…SRYY), 161-199 (TGLD…PLKV), and 213-249 (RITL…RPPD). A compositionally biased stretch (polar residues) spans 99-108 (IQQQAGTVPH). A phosphoserine mark is found at Ser-109, Ser-114, Ser-178, and Ser-188. Residues 167–178 (TPTSTRAETETS) show a composition bias toward polar residues. The span at 190–199 (LAKRLKPLKV) shows a compositional bias: basic residues. Residues 220–234 (NVPPPSIEPLTPPPL) are compositionally biased toward pro residues.

The protein localises to the membrane. The protein is Transmembrane protein 51 (Tmem51) of Mus musculus (Mouse).